The sequence spans 505 residues: Probable alpha-L-arabinofuranosidase C (505 aa).

3 N-linked (GlcNAc...) asparagine glycosylation sites follow: asparagine 152, asparagine 269, and asparagine 438.

It belongs to the glycosyl hydrolase 51 family.

The protein localises to the secreted. It catalyses the reaction Hydrolysis of terminal non-reducing alpha-L-arabinofuranoside residues in alpha-L-arabinosides.. It participates in glycan metabolism; L-arabinan degradation. Alpha-L-arabinofuranosidase involved in the degradation of arabinoxylan, a major component of plant hemicellulose. Acts only on small linear 1,5-alpha-linked L-arabinofuranosyl oligosaccharides. The sequence is that of Probable alpha-L-arabinofuranosidase C (abfC) from Aspergillus clavatus (strain ATCC 1007 / CBS 513.65 / DSM 816 / NCTC 3887 / NRRL 1 / QM 1276 / 107).